We begin with the raw amino-acid sequence, 360 residues long: Photosystem II protein D1 2 (360 aa).

Helical transmembrane passes span 29-46 (YIGW…AATT), 118-133 (HFLT…EWEL), and 142-156 (WICL…AATA). H118 contributes to the chlorophyll a binding site. Residue Y126 coordinates pheophytin a. The [CaMn4O5] cluster site is built by D170 and E189. A helical membrane pass occupies residues 197–218 (FHMLGVAGVFGGSLFSAMHGSL). H198 is a chlorophyll a binding site. A quinone is bound by residues H215 and 264 to 265 (SF). Fe cation is bound at residue H215. A Fe cation-binding site is contributed by H272. The chain crosses the membrane as a helical span at residues 274–288 (FLAAWPVIGIWFTAL). [CaMn4O5] cluster-binding residues include H332, E333, D342, and A344. Residues 345-360 (AGEVAPVAISAPAING) constitute a propeptide that is removed on maturation.

Belongs to the reaction center PufL/M/PsbA/D family. As to quaternary structure, PSII is composed of 1 copy each of membrane proteins PsbA, PsbB, PsbC, PsbD, PsbE, PsbF, PsbH, PsbI, PsbJ, PsbK, PsbL, PsbM, PsbT, PsbX, PsbY, PsbZ, Psb30/Ycf12, peripheral proteins PsbO, CyanoQ (PsbQ), PsbU, PsbV and a large number of cofactors. It forms dimeric complexes. Requires The D1/D2 heterodimer binds P680, chlorophylls that are the primary electron donor of PSII, and subsequent electron acceptors. It shares a non-heme iron and each subunit binds pheophytin, quinone, additional chlorophylls, carotenoids and lipids. D1 provides most of the ligands for the Mn4-Ca-O5 cluster of the oxygen-evolving complex (OEC). There is also a Cl(-1) ion associated with D1 and D2, which is required for oxygen evolution. The PSII complex binds additional chlorophylls, carotenoids and specific lipids. as cofactor. Tyr-161 forms a radical intermediate that is referred to as redox-active TyrZ, YZ or Y-Z. Post-translationally, C-terminally processed by CtpA; processing is essential to allow assembly of the oxygen-evolving complex and thus photosynthetic growth.

It is found in the cellular thylakoid membrane. It catalyses the reaction 2 a plastoquinone + 4 hnu + 2 H2O = 2 a plastoquinol + O2. Photosystem II (PSII) is a light-driven water:plastoquinone oxidoreductase that uses light energy to abstract electrons from H(2)O, generating O(2) and a proton gradient subsequently used for ATP formation. It consists of a core antenna complex that captures photons, and an electron transfer chain that converts photonic excitation into a charge separation. The D1/D2 (PsbA/PsbD) reaction center heterodimer binds P680, the primary electron donor of PSII as well as several subsequent electron acceptors. The polypeptide is Photosystem II protein D1 2 (Nostoc sp. (strain PCC 7120 / SAG 25.82 / UTEX 2576)).